The sequence spans 827 residues: Inactive rhomboid protein 2 (827 aa).

The segment at 1–87 (MDSTDKNGES…GFRRQASLSQ (87 aa)) is disordered. The Cytoplasmic segment spans residues 1 to 380 (MDSTDKNGES…HRPYFTYWLT (380 aa)). At serine 60 the chain carries Phosphoserine. Residues 64-77 (QRGRWQEGSSEKRP) are compositionally biased toward basic and acidic residues. 5 positions are modified to phosphoserine: serine 84, serine 88, serine 294, serine 296, and serine 299. Residues 381-401 (FVHIIITLLVICTYGIAPVGF) form a helical membrane-spanning segment. The Lumenal portion of the chain corresponds to 402–631 (AQHVTTQLVL…PDQFYRLWLS (230 aa)). A helical membrane pass occupies residues 632 to 652 (LFLHAGVVHCLVSVVFQMTIL). The Cytoplasmic segment spans residues 653-663 (RDLEKLAGWHR). Residues 664 to 684 (IAIIFILSGITGNLASAIFLP) traverse the membrane as a helical segment. Residues 685–686 (YR) lie on the Lumenal side of the membrane. A helical transmembrane segment spans residues 687 to 707 (AEVGPAGSQFGLLACLFVELF). Topologically, residues 708-718 (QSWQLLERPWK) are cytoplasmic. Residues 719-739 (AFLNLSAIVLFLFICGLLPWI) form a helical membrane-spanning segment. Residues 740–744 (DNIAH) are Lumenal-facing. The chain crosses the membrane as a helical span at residues 745–765 (IFGFLSGLLLAFAFLPYITFG). The Cytoplasmic segment spans residues 766–773 (TSDKYRKR). A helical transmembrane segment spans residues 774 to 794 (ALILVSLLVFAGLFASLVIWL). Residues 795 to 827 (YVYPINWPWIEYLTCFPFTSRFCEKYELDQVLH) are Lumenal-facing.

This sequence belongs to the peptidase S54 family. In terms of assembly, interacts with EGF. Interacts (via cytoplasmic N-terminus) with FRMD8/iTAP; this interaction leads to mutual protein stabilization. Interacts with ADAM17/TACE. In terms of tissue distribution, detected in retina and spleen.

It is found in the endoplasmic reticulum membrane. The protein resides in the cell membrane. Regulates ADAM17 protease, a sheddase of the epidermal growth factor (EGF) receptor ligands and TNF, thereby plays a role in sleep, cell survival, proliferation, migration and inflammation. Does not exhibit any protease activity on its own. The protein is Inactive rhomboid protein 2 (RHBDF2) of Canis lupus familiaris (Dog).